The following is a 468-amino-acid chain: 3-isopropylmalate dehydratase large subunit (468 aa).

Positions 347, 407, and 410 each coordinate [4Fe-4S] cluster.

It belongs to the aconitase/IPM isomerase family. LeuC type 1 subfamily. Heterodimer of LeuC and LeuD. It depends on [4Fe-4S] cluster as a cofactor.

It catalyses the reaction (2R,3S)-3-isopropylmalate = (2S)-2-isopropylmalate. Its pathway is amino-acid biosynthesis; L-leucine biosynthesis; L-leucine from 3-methyl-2-oxobutanoate: step 2/4. In terms of biological role, catalyzes the isomerization between 2-isopropylmalate and 3-isopropylmalate, via the formation of 2-isopropylmaleate. This Campylobacter jejuni subsp. jejuni serotype O:6 (strain 81116 / NCTC 11828) protein is 3-isopropylmalate dehydratase large subunit.